A 404-amino-acid chain; its full sequence is Probable tRNA sulfurtransferase (404 aa).

In terms of domain architecture, THUMP spans 61 to 166 (EAVSERLKDV…SGYSYIMCDE (106 aa)). Residues 184–185 (LL), 209–210 (HF), Arg266, Gly288, and Gln297 each bind ATP.

The protein belongs to the ThiI family.

It is found in the cytoplasm. The enzyme catalyses [ThiI sulfur-carrier protein]-S-sulfanyl-L-cysteine + a uridine in tRNA + 2 reduced [2Fe-2S]-[ferredoxin] + ATP + H(+) = [ThiI sulfur-carrier protein]-L-cysteine + a 4-thiouridine in tRNA + 2 oxidized [2Fe-2S]-[ferredoxin] + AMP + diphosphate. It catalyses the reaction [ThiS sulfur-carrier protein]-C-terminal Gly-Gly-AMP + S-sulfanyl-L-cysteinyl-[cysteine desulfurase] + AH2 = [ThiS sulfur-carrier protein]-C-terminal-Gly-aminoethanethioate + L-cysteinyl-[cysteine desulfurase] + A + AMP + 2 H(+). Its pathway is cofactor biosynthesis; thiamine diphosphate biosynthesis. Its function is as follows. Catalyzes the ATP-dependent transfer of a sulfur to tRNA to produce 4-thiouridine in position 8 of tRNAs, which functions as a near-UV photosensor. Also catalyzes the transfer of sulfur to the sulfur carrier protein ThiS, forming ThiS-thiocarboxylate. This is a step in the synthesis of thiazole, in the thiamine biosynthesis pathway. The sulfur is donated as persulfide by IscS. This Bacillus cereus (strain ATCC 14579 / DSM 31 / CCUG 7414 / JCM 2152 / NBRC 15305 / NCIMB 9373 / NCTC 2599 / NRRL B-3711) protein is Probable tRNA sulfurtransferase.